The sequence spans 276 residues: MDSSREPTLGRLDAAGFWQVWQRFDADEKGYIEEKELDAFFLHMLMKLGTDDTVMKANLHKVKQQFMTTQDASKDGRIRMKELAGMFLSEDENFLLLFRRENPLDSSVEFMQIWRKYDADSSGFISAAELRNFLRDLFLHHKKAISEAKLEEYTGTMMKIFDRNKDGRLDLNDLARILALQENFLLQFKMDACSTEERKRDFEKIFAYYDVSKTGALEGPEVDGFVKDMMELVQPSISGVDLDKFREILLRHCDVNKDGKIQKSELALCLGLKINP.

EF-hand domains lie at Leu-12–Lys-47, Asn-58–Asn-93, Asp-105–His-140, Lys-149–Phe-184, Glu-197–Leu-232, and Val-240–Pro-276. Ca(2+)-binding residues include Asp-25, Asp-27, Tyr-31, Glu-36, Asp-71, Ser-73, Asp-75, Arg-77, Glu-82, Asp-118, Asp-120, Ser-122, Glu-129, Asp-162, Asn-164, Asp-166, Arg-168, Asp-173, Asp-210, Ser-212, Thr-214, Glu-221, Asp-254, Asn-256, Asp-258, Lys-260, and Glu-265.

As to expression, expressed at high levels in the pancreatic islets of Langerhans and to a much lesser extent in the gastrointestinal tract (stomach, small intestine and colon), the adrenal medulla and cortex and the thyroid C-cells. In the brain, the expression is restricted to distinct subtypes of neurons with highest expression in the molecular layer of the cerebellum (stellate and basket cells), in the anterior part of the pituitary gland, in the thalamus, in the hypothalamus and in a subgroup of neocortical neurons.

The protein resides in the cytoplasm. Its subcellular location is the secreted. It localises to the cytoplasmic vesicle. The protein localises to the secretory vesicle membrane. This Homo sapiens (Human) protein is Secretagogin (SCGN).